The following is a 184-amino-acid chain: ATP synthase subunit b, chloroplastic (184 aa).

A helical membrane pass occupies residues 27 to 49 (LATNPINLSVVFGVLIFFGKGVL).

This sequence belongs to the ATPase B chain family. In terms of assembly, F-type ATPases have 2 components, F(1) - the catalytic core - and F(0) - the membrane proton channel. F(1) has five subunits: alpha(3), beta(3), gamma(1), delta(1), epsilon(1). F(0) has four main subunits: a(1), b(1), b'(1) and c(10-14). The alpha and beta chains form an alternating ring which encloses part of the gamma chain. F(1) is attached to F(0) by a central stalk formed by the gamma and epsilon chains, while a peripheral stalk is formed by the delta, b and b' chains.

It is found in the plastid. The protein localises to the chloroplast thylakoid membrane. Functionally, f(1)F(0) ATP synthase produces ATP from ADP in the presence of a proton or sodium gradient. F-type ATPases consist of two structural domains, F(1) containing the extramembraneous catalytic core and F(0) containing the membrane proton channel, linked together by a central stalk and a peripheral stalk. During catalysis, ATP synthesis in the catalytic domain of F(1) is coupled via a rotary mechanism of the central stalk subunits to proton translocation. Component of the F(0) channel, it forms part of the peripheral stalk, linking F(1) to F(0). This Lobularia maritima (Sweet alyssum) protein is ATP synthase subunit b, chloroplastic.